A 423-amino-acid polypeptide reads, in one-letter code: Kynureninase (423 aa).

Residues Leu-105, Ser-106, 133–136 (FPSD), Asp-218, His-221, and Tyr-243 contribute to the pyridoxal 5'-phosphate site. Lys-244 is modified (N6-(pyridoxal phosphate)lysine). Pyridoxal 5'-phosphate is bound by residues Trp-273 and Asn-301.

Belongs to the kynureninase family. Homodimer. Requires pyridoxal 5'-phosphate as cofactor.

The catalysed reaction is L-kynurenine + H2O = anthranilate + L-alanine + H(+). It catalyses the reaction 3-hydroxy-L-kynurenine + H2O = 3-hydroxyanthranilate + L-alanine + H(+). Its pathway is amino-acid degradation; L-kynurenine degradation; L-alanine and anthranilate from L-kynurenine: step 1/1. It participates in cofactor biosynthesis; NAD(+) biosynthesis; quinolinate from L-kynurenine: step 2/3. Functionally, catalyzes the cleavage of L-kynurenine (L-Kyn) and L-3-hydroxykynurenine (L-3OHKyn) into anthranilic acid (AA) and 3-hydroxyanthranilic acid (3-OHAA), respectively. The chain is Kynureninase from Xanthomonas oryzae pv. oryzae (strain MAFF 311018).